The chain runs to 40 residues: Amyloid-beta precursor protein (40 aa).

Belongs to the APP family. As to quaternary structure, binds, via its C-terminus, to the PID domain of several cytoplasmic proteins, including APBB family members, the APBA family, MAPK8IP1, SHC1 and NUMB and DAB1. Binding to DAB1 inhibits its serine phosphorylation. Interacts (via NPXY motif) with DAB2 (via PID domain); the interaction is impaired by tyrosine phosphorylation of the NPXY motif. Also interacts with GPCR-like protein BPP, APPBP1, IB1, KNS2 (via its TPR domains), APPBP2 (via BaSS) and DDB1. In vitro, it binds MAPT via the MT-binding domains. Associates with microtubules in the presence of ATP and in a kinesin-dependent manner. Interacts, through a C-terminal domain, with GNAO1. Interacts with CPEB1, ANKS1B and AGER. Interacts with ITM2B. Interacts with ITM2C. Interacts with IDE. Can form homodimers; dimerization is enhanced in the presence of Cu(2+) ions. Can form homodimers; this is promoted by heparin binding. Interacts with SORL1 (via N-terminal ectodomain); this interaction retains APP in the trans-Golgi network and reduces processing into soluble APP-alpha and amyloid-beta peptides. Interacts with PLD3. Interacts with VDAC1. Interacts with NSG1; could regulate APP processing. Interacts with LRRK2. Interacts (via cytoplasmic domain) with KIF5B. Interacts (via C-terminus) with APBB2/FE65L1 (via C-terminus). Interacts (via intracellular domain) with APBB3. In terms of processing, proteolytically processed under normal cellular conditions. Cleavage either by alpha-secretase, beta-secretase or theta-secretase leads to generation and extracellular release of soluble APP peptides, S-APP-alpha and S-APP-beta, and the retention of corresponding membrane-anchored C-terminal fragments, C80, C83 and C99. Subsequent processing of C80 and C83 by gamma-secretase yields P3 peptides. This is the major secretory pathway and is non-amyloidogenic. Alternatively, presenilin/nicastrin-mediated gamma-secretase processing of C99 releases the amyloid-beta proteins, amyloid-beta protein 40 and amyloid-beta protein 42, major components of amyloid plaques, and the cytotoxic C-terminal fragments, gamma-CTF(50), gamma-CTF(57) and gamma-CTF(59). PSEN1 cleavage is more efficient with C83 than with C99 as substrate (in vitro). Amyloid-beta protein 40 and Amyloid-beta protein 42 are cleaved by ACE. Many other minor amyloid-beta peptides, amyloid-beta 1-X peptides, are found in cerebral spinal fluid (CSF) including the amyloid-beta X-15 peptides, produced from the cleavage by alpha-secretase.

The protein resides in the cell membrane. It is found in the membrane. It localises to the perikaryon. The protein localises to the cell projection. Its subcellular location is the growth cone. The protein resides in the clathrin-coated pit. It is found in the early endosome. It localises to the cytoplasmic vesicle. Functions as a cell surface receptor and performs physiological functions on the surface of neurons relevant to neurite growth, neuronal adhesion and axonogenesis. Interaction between APP molecules on neighboring cells promotes synaptogenesis. Involved in cell mobility and transcription regulation through protein-protein interactions. Can promote transcription activation through binding to APBB1-KAT5 and inhibit Notch signaling through interaction with Numb. Couples to apoptosis-inducing pathways such as those mediated by G(o) and JIP. Inhibits G(o)-alpha ATPase activity. Acts as a kinesin I membrane receptor, mediating the axonal transport of beta-secretase and presenilin 1. May be involved in copper homeostasis/oxidative stress through copper ion reduction. In vitro, copper-metallated APP induces neuronal death directly or is potentiated through Cu(2+)-mediated low-density lipoprotein oxidation. Can regulate neurite outgrowth through binding to components of the extracellular matrix such as heparin and collagen I and IV. Induces a AGER-dependent pathway that involves activation of p38 MAPK, resulting in internalization of amyloid-beta peptide and mitochondrial dysfunction in cultured cortical neurons. Provides Cu(2+) ions for GPC1 which are required for release of nitric oxide (NO) and subsequent degradation of the heparan sulfate chains on GPC1. In Felis catus (Cat), this protein is Amyloid-beta precursor protein.